The primary structure comprises 272 residues: Glycerol-3-phosphate acyltransferase (272 aa).

A run of 6 helical transmembrane segments spans residues 9 to 29 (IIILFLFIGYFIGNILFGILI), 60 to 80 (AIVMVLDFFKSWFSTFVCLLI), 99 to 119 (VIIYLGGFAAIIGHCFPCFYF), 149 to 169 (ASISPWMFFICFVLFWSICLI), 173 to 193 (VSLASIVTVFLLPIWSLIPHL), and 226 to 246 (LNWWYILVTFLLELLTAVLVI).

Belongs to the PlsY family. As to quaternary structure, probably interacts with PlsX.

It is found in the cell membrane. The catalysed reaction is an acyl phosphate + sn-glycerol 3-phosphate = a 1-acyl-sn-glycero-3-phosphate + phosphate. Its pathway is lipid metabolism; phospholipid metabolism. Catalyzes the transfer of an acyl group from acyl-phosphate (acyl-PO(4)) to glycerol-3-phosphate (G3P) to form lysophosphatidic acid (LPA). This enzyme utilizes acyl-phosphate as fatty acyl donor, but not acyl-CoA or acyl-ACP. This is Glycerol-3-phosphate acyltransferase from Malacoplasma penetrans (strain HF-2) (Mycoplasma penetrans).